A 365-amino-acid chain; its full sequence is Aminomethyltransferase (365 aa).

This sequence belongs to the GcvT family. The glycine cleavage system is composed of four proteins: P, T, L and H.

It carries out the reaction N(6)-[(R)-S(8)-aminomethyldihydrolipoyl]-L-lysyl-[protein] + (6S)-5,6,7,8-tetrahydrofolate = N(6)-[(R)-dihydrolipoyl]-L-lysyl-[protein] + (6R)-5,10-methylene-5,6,7,8-tetrahydrofolate + NH4(+). Its function is as follows. The glycine cleavage system catalyzes the degradation of glycine. This chain is Aminomethyltransferase, found in Aeromonas salmonicida (strain A449).